A 426-amino-acid chain; its full sequence is Ammonium transporter Rh type A (426 aa).

Residues 1 to 4 (MRFK) lie on the Cytoplasmic side of the membrane. Residues 5–25 (FPLMAIGLEVVMIVLFALFVQ) traverse the membrane as a helical segment. Residues 26–54 (YETSVNTSRNPNETESAAMDVEKTMESYP) lie on the Extracellular side of the membrane. N-linked (GlcNAc...) asparagine glycans are attached at residues asparagine 31 and asparagine 37. Residues 55–75 (FFQDVHIMVFAGFGFLMTFLW) form a helical membrane-spanning segment. Residues 76 to 78 (KYG) are Cytoplasmic-facing. A helical membrane pass occupies residues 79 to 99 (FSGVGINLLIAALGLQWGTII). Topologically, residues 100 to 124 (QGIFRSHGQKFLIEMKNMIHADFST) are extracellular. The next 2 helical transmembrane spans lie at 125–145 (VTVL…QMLI) and 146–166 (MTIL…KILW). Residues 167-170 (ASDT) lie on the Extracellular side of the membrane. A helical membrane pass occupies residues 171-191 (GESMTIHAFGAYFGLAVAGIL). The Cytoplasmic segment spans residues 192–210 (YRSGLKEKHSNEESVYHSD). Residues 211 to 231 (LFAMIGSLFLWIFWPSFNSAT) form a helical membrane-spanning segment. Over 232-241 (ADEAKKQYRA) the chain is Extracellular. Residues 242 to 262 (IVNTYFSLAASVVTAYACSSL) form a helical membrane-spanning segment. The Cytoplasmic portion of the chain corresponds to 263–270 (LESRGKLN). A helical membrane pass occupies residues 271–288 (MVHIQNATLAGGVAVGTC). Residues 289 to 292 (ADME) lie on the Extracellular side of the membrane. A helical transmembrane segment spans residues 293–313 (IPPYYAMIIGSIAGAVSVFGF). At 314 to 331 (KFLTPLFTTKLRIHDTCG) the chain is on the cytoplasmic side. Residues 332-352 (VHNLHGLPGVIGGLAGIITVA) traverse the membrane as a helical segment. Over 353–371 (LEESDSTKTVSQAAALGSS) the chain is Extracellular. The helical transmembrane segment at 372-392 (IATALVGGLITGAILKIPFWA) threads the bilayer. The Cytoplasmic segment spans residues 393–426 (QPPDEDCYDDSVYWEVPERKEYDNHFHELLSTLH).

The protein belongs to the ammonium transporter (TC 2.A.49) family. Rh subfamily. Homodimer. Heterotrimer; a RHCE monomer interacts with a RHAG homodimer. Component of the ankyrin-1 complex in the erythrocyte, composed of ANK1, RHCE, RHAG, SLC4A1, EPB42, GYPA, GYPB and AQP1. Interacts with GYPB (via the N-terminal); this interaction bridges the (RHAG)2(RHCE) heterotrimer with the SLC4A1 Band 3 I dimer complexed with GYPA. Glycosylated.

The protein resides in the membrane. The catalysed reaction is methylamine(out) = methylamine(in). The enzyme catalyses NH4(+)(in) = NH4(+)(out). It catalyses the reaction CO2(out) = CO2(in). Its function is as follows. Component of the ankyrin-1 complex, a multiprotein complex involved in the stability and shape of the erythrocyte membrane. Heterotrimer with RHCE (RHAG)2(RHCE), that transports ammonium and its related derivative methylammonium, in both neutral and ionic forms, across the erythrocyte membrane. The transport of NH4(+) is electrogenic and masks the NH3 transport. Also, may act as a CO2 channel. Moreover in erythrocyte, regulates RHD membrane expression and is associated with rhesus blood group antigen expression. This is Ammonium transporter Rh type A from Bos taurus (Bovine).